We begin with the raw amino-acid sequence, 104 residues long: MNNTEFHELVDEKLQLLEDMIDDSGADIEPVITGNVLTLEFENRSQIVINKQEPMHEIWLASKSGGFHFSYVDEKWTCSKTGMEFIEMVKEECQKHADEEIEWV.

The protein belongs to the frataxin family.

In terms of biological role, involved in iron-sulfur (Fe-S) cluster assembly. May act as a regulator of Fe-S biogenesis. This is Iron-sulfur cluster assembly protein CyaY from Aliivibrio fischeri (strain MJ11) (Vibrio fischeri).